The following is a 372-amino-acid chain: 4-hydroxy-3-methylbut-2-en-1-yl diphosphate synthase (flavodoxin) (372 aa).

[4Fe-4S] cluster is bound by residues Cys-270, Cys-273, Cys-305, and Glu-312.

This sequence belongs to the IspG family. The cofactor is [4Fe-4S] cluster.

It carries out the reaction (2E)-4-hydroxy-3-methylbut-2-enyl diphosphate + oxidized [flavodoxin] + H2O + 2 H(+) = 2-C-methyl-D-erythritol 2,4-cyclic diphosphate + reduced [flavodoxin]. The protein operates within isoprenoid biosynthesis; isopentenyl diphosphate biosynthesis via DXP pathway; isopentenyl diphosphate from 1-deoxy-D-xylulose 5-phosphate: step 5/6. Its function is as follows. Converts 2C-methyl-D-erythritol 2,4-cyclodiphosphate (ME-2,4cPP) into 1-hydroxy-2-methyl-2-(E)-butenyl 4-diphosphate. This is 4-hydroxy-3-methylbut-2-en-1-yl diphosphate synthase (flavodoxin) from Escherichia coli (strain SMS-3-5 / SECEC).